The sequence spans 311 residues: Heme A synthase (311 aa).

Residues 1–6 are Cytoplasmic-facing; it reads MQRFIK. The chain crosses the membrane as a helical span at residues 7-27; it reads WLAVITSLDLLIVLLGGALVT. Residues 28–62 lie on the Extracellular side of the membrane; sequence KTGSGQGCGKSWPLCNGEFVPSNLSMETIIELSHR. Cysteines 35 and 42 form a disulfide. Glutamate 58 is a catalytic residue. Heme o is bound at residue histidine 61. A helical transmembrane segment spans residues 63-83; the sequence is LTSGSAGILVTLLCILSWKYY. At 84 to 91 the chain is on the cytoplasmic side; that stretch reads KHVRETKT. Residues 92 to 112 form a helical membrane-spanning segment; sequence LAILSFVFLVAQALMGAAAVV. Over 113 to 121 the chain is Extracellular; the sequence is WGQMPAVLA. A helical transmembrane segment spans residues 122–142; the sequence is IHFGISLISFASVILLTCLIF. Position 123 (histidine 123) interacts with heme o. Residues 143–159 are Cytoplasmic-facing; it reads EIDQKFDARSLIMDKKM. Residues 160–180 traverse the membrane as a helical segment; that stretch reads KFHIYGVTIYSYIVVYTGALV. Residues 181–211 lie on the Extracellular side of the membrane; sequence RHERASLACPDFPLCSKNRPMPTQLHEWVQM. The cysteines at positions 189 and 195 are disulfide-linked. The helical transmembrane segment at 212–232 threads the bilayer; that stretch reads GHRVAAMLIFAWILYAMILAI. Histidine 213 contacts heme b. Over 233 to 243 the chain is Cytoplasmic; it reads RHYKQQPVVYW. The chain crosses the membrane as a helical span at residues 244-264; sequence GWIISFILVTLQAVVGVLVVF. Topologically, residues 265 to 271 are extracellular; it reads TNASLAM. A helical transmembrane segment spans residues 272–292; that stretch reads ALLHSLFISCLFAVLCYLVML. Histidine 275 contacts heme b. Over 293–311 the chain is Cytoplasmic; the sequence is GTRSKVNAKEAELTSKQTK.

Belongs to the COX15/CtaA family. Type 1 subfamily. Interacts with CtaB. Heme b serves as cofactor.

The protein localises to the cell membrane. It carries out the reaction Fe(II)-heme o + 2 A + H2O = Fe(II)-heme a + 2 AH2. Its pathway is porphyrin-containing compound metabolism; heme A biosynthesis; heme A from heme O: step 1/1. In terms of biological role, catalyzes the conversion of heme O to heme A by two successive hydroxylations of the methyl group at C8. The first hydroxylation forms heme I, the second hydroxylation results in an unstable dihydroxymethyl group, which spontaneously dehydrates, resulting in the formyl group of heme A. In Bacillus cereus (strain ATCC 14579 / DSM 31 / CCUG 7414 / JCM 2152 / NBRC 15305 / NCIMB 9373 / NCTC 2599 / NRRL B-3711), this protein is Heme A synthase.